The chain runs to 352 residues: Photosystem II D2 protein (352 aa).

A helical membrane pass occupies residues 40-60 (CAYLALGGWLTGTTFVTSWYT). His-117 serves as a coordination point for chlorophyll a. The chain crosses the membrane as a helical span at residues 124-140 (GFMLRQFEIARLVGVRP). Residues Gln-129 and Asn-142 each contribute to the pheophytin a site. Residues 152–165 (VFVSVFLIYPLGQS) form a helical membrane-spanning segment. Chlorophyll a is bound at residue His-197. A helical transmembrane segment spans residues 207 to 227 (GALLCAIHGATVENTLYKDGE). His-214 and Phe-261 together coordinate a plastoquinone. His-214 contributes to the Fe cation binding site. His-268 contacts Fe cation. The helical transmembrane segment at 278-294 (GLWMSSIGVVGLALNLR) threads the bilayer.

This sequence belongs to the reaction center PufL/M/PsbA/D family. As to quaternary structure, PSII is composed of 1 copy each of membrane proteins PsbA, PsbB, PsbC, PsbD, PsbE, PsbF, PsbH, PsbI, PsbJ, PsbK, PsbL, PsbM, PsbT, PsbX, PsbY, PsbZ, Psb30/Ycf12, peripheral proteins PsbO, CyanoQ (PsbQ), PsbU, PsbV and a large number of cofactors. It forms dimeric complexes. The D1/D2 heterodimer binds P680, chlorophylls that are the primary electron donor of PSII, and subsequent electron acceptors. It shares a non-heme iron and each subunit binds pheophytin, quinone, additional chlorophylls, carotenoids and lipids. There is also a Cl(-1) ion associated with D1 and D2, which is required for oxygen evolution. The PSII complex binds additional chlorophylls, carotenoids and specific lipids. is required as a cofactor.

It localises to the cellular thylakoid membrane. The enzyme catalyses 2 a plastoquinone + 4 hnu + 2 H2O = 2 a plastoquinol + O2. Functionally, photosystem II (PSII) is a light-driven water:plastoquinone oxidoreductase that uses light energy to abstract electrons from H(2)O, generating O(2) and a proton gradient subsequently used for ATP formation. It consists of a core antenna complex that captures photons, and an electron transfer chain that converts photonic excitation into a charge separation. The D1/D2 (PsbA/PsbD) reaction center heterodimer binds P680, the primary electron donor of PSII as well as several subsequent electron acceptors. D2 is needed for assembly of a stable PSII complex. This chain is Photosystem II D2 protein, found in Synechococcus sp. (strain JA-3-3Ab) (Cyanobacteria bacterium Yellowstone A-Prime).